A 417-amino-acid polypeptide reads, in one-letter code: Imidazolonepropionase (417 aa).

His-77 and His-79 together coordinate Fe(3+). Residues His-77 and His-79 each contribute to the Zn(2+) site. 3 residues coordinate 4-imidazolone-5-propanoate: Arg-86, Tyr-149, and His-182. Residue Tyr-149 participates in N-formimidoyl-L-glutamate binding. Fe(3+) is bound at residue His-244. Position 244 (His-244) interacts with Zn(2+). Glu-247 provides a ligand contact to 4-imidazolone-5-propanoate. Asp-323 is a binding site for Fe(3+). Asp-323 contacts Zn(2+). Residue Asn-325 participates in N-formimidoyl-L-glutamate binding.

The protein belongs to the metallo-dependent hydrolases superfamily. HutI family. Zn(2+) is required as a cofactor. The cofactor is Fe(3+).

Its subcellular location is the cytoplasm. It catalyses the reaction 4-imidazolone-5-propanoate + H2O = N-formimidoyl-L-glutamate. It participates in amino-acid degradation; L-histidine degradation into L-glutamate; N-formimidoyl-L-glutamate from L-histidine: step 3/3. Catalyzes the hydrolytic cleavage of the carbon-nitrogen bond in imidazolone-5-propanoate to yield N-formimidoyl-L-glutamate. It is the third step in the universal histidine degradation pathway. The chain is Imidazolonepropionase from Halobacterium salinarum (strain ATCC 29341 / DSM 671 / R1).